The chain runs to 162 residues: Chemoreceptor glutamine deamidase CheD (162 aa).

It belongs to the CheD family. In terms of assembly, forms a complex with CheC.

It catalyses the reaction L-glutaminyl-[protein] + H2O = L-glutamyl-[protein] + NH4(+). In terms of biological role, deamidates glutamine residues to glutamate on methyl-accepting chemotaxis receptors (MCPs). CheD-mediated MCP deamidation is required for productive communication of the conformational signals of the chemoreceptors to the CheA kinase. The polypeptide is Chemoreceptor glutamine deamidase CheD (Halalkalibacterium halodurans (strain ATCC BAA-125 / DSM 18197 / FERM 7344 / JCM 9153 / C-125) (Bacillus halodurans)).